Consider the following 497-residue polypeptide: Probable cytosol aminopeptidase (497 aa).

Positions 265 and 270 each coordinate Mn(2+). The active site involves Lys-277. Asp-288, Asp-347, and Glu-349 together coordinate Mn(2+). The active site involves Arg-351.

This sequence belongs to the peptidase M17 family. Mn(2+) serves as cofactor.

It is found in the cytoplasm. It catalyses the reaction Release of an N-terminal amino acid, Xaa-|-Yaa-, in which Xaa is preferably Leu, but may be other amino acids including Pro although not Arg or Lys, and Yaa may be Pro. Amino acid amides and methyl esters are also readily hydrolyzed, but rates on arylamides are exceedingly low.. The enzyme catalyses Release of an N-terminal amino acid, preferentially leucine, but not glutamic or aspartic acids.. Presumably involved in the processing and regular turnover of intracellular proteins. Catalyzes the removal of unsubstituted N-terminal amino acids from various peptides. This chain is Probable cytosol aminopeptidase, found in Geobacillus sp. (strain WCH70).